We begin with the raw amino-acid sequence, 258 residues long: Hydroxyacylglutathione hydrolase (258 aa).

Residues His-56, His-58, Asp-60, His-61, His-112, Asp-132, and His-170 each contribute to the Zn(2+) site.

Belongs to the metallo-beta-lactamase superfamily. Glyoxalase II family. As to quaternary structure, monomer. The cofactor is Zn(2+).

It catalyses the reaction an S-(2-hydroxyacyl)glutathione + H2O = a 2-hydroxy carboxylate + glutathione + H(+). It participates in secondary metabolite metabolism; methylglyoxal degradation; (R)-lactate from methylglyoxal: step 2/2. Thiolesterase that catalyzes the hydrolysis of S-D-lactoyl-glutathione to form glutathione and D-lactic acid. The sequence is that of Hydroxyacylglutathione hydrolase from Pseudomonas aeruginosa (strain ATCC 15692 / DSM 22644 / CIP 104116 / JCM 14847 / LMG 12228 / 1C / PRS 101 / PAO1).